The chain runs to 426 residues: O-methyltransferase pyvH (426 aa).

Residues 258–259, Asp-281, 308–309, and Arg-323 each bind S-adenosyl-L-methionine; these read GG and DF. His-327 serves as the catalytic Proton acceptor.

It belongs to the class I-like SAM-binding methyltransferase superfamily. Cation-independent O-methyltransferase family.

It participates in secondary metabolite biosynthesis. Its function is as follows. O-methyltransferase; part of the gene cluster that mediates the biosynthesis of pyranoviolin A, a pyranonigrin analog with a C-3 methoxy group. Initially, the PKS portion of pyvA synthesizes C-10 carbon chain from 5 molecules of malonyl-CoA, which is then condensed with the thiolation (T) domain-bound glycine activated by the adenylation (A) domain. The subsequent chain release by Dieckmann condensation (DKC) could be catalyzed by the TE domain present at the C-terminus of pyvA and/or the alpha/beta hydrolase pyvD, installing the tetramic acid moiety. The FAD-dependent monooxygenase pyvC next epoxidizes one of the olefins of the polyketide part, and the epoxide ring-opening induces the dihydro-gamma-pyrone ring formation. The cytochrome P450 monooxygeanse pyvB would be responsible for the 2 consecutive reactions, in which the dihydro-gamma-pyrone is oxidized to gamma-pyrone and C-7 is hydroxylated to yield pyranonigrin F. Finally, the O-methyltransferase pyvH methylates the C-3 hydroxy group to complete the biosynthesis. This Aspergillus violaceofuscus (strain CBS 115571) protein is O-methyltransferase pyvH.